The primary structure comprises 184 residues: MEDYKAFLDEKMSKVLLSLDNEYKTLRTGRISSNVFDKIFIQYHGQKTPITQVSSIRIPEARLVVIQPWDKTILNKIEQAILNSDLSMNPSSDGSVIRIKVPALTSERRQDIVKHAKKIAEEHKVSTRNIRQDLNNKVKKQEKESEITEDSLKRILDDIQKSIDIYIKRIDTILESKIQEIMEV.

This sequence belongs to the RRF family.

It localises to the cytoplasm. Functionally, responsible for the release of ribosomes from messenger RNA at the termination of protein biosynthesis. May increase the efficiency of translation by recycling ribosomes from one round of translation to another. This Borrelia garinii subsp. bavariensis (strain ATCC BAA-2496 / DSM 23469 / PBi) (Borreliella bavariensis) protein is Ribosome-recycling factor.